The primary structure comprises 274 residues: Phosphatidylglycerol--prolipoprotein diacylglyceryl transferase (274 aa).

Helical transmembrane passes span 19-39 (VGSV…VLGL), 59-79 (LAIW…VLFQ), 93-113 (IWRG…AALI), and 120-140 (VSFW…QAIG). An a 1,2-diacyl-sn-glycero-3-phospho-(1'-sn-glycerol)-binding site is contributed by R141. 3 helical membrane-spanning segments follow: residues 181-201 (TFLY…ALFF), 209-229 (GTIF…IEGL), and 243-263 (QVVS…LYLL).

Belongs to the Lgt family.

The protein localises to the cell inner membrane. The enzyme catalyses L-cysteinyl-[prolipoprotein] + a 1,2-diacyl-sn-glycero-3-phospho-(1'-sn-glycerol) = an S-1,2-diacyl-sn-glyceryl-L-cysteinyl-[prolipoprotein] + sn-glycerol 1-phosphate + H(+). It functions in the pathway protein modification; lipoprotein biosynthesis (diacylglyceryl transfer). Catalyzes the transfer of the diacylglyceryl group from phosphatidylglycerol to the sulfhydryl group of the N-terminal cysteine of a prolipoprotein, the first step in the formation of mature lipoproteins. This is Phosphatidylglycerol--prolipoprotein diacylglyceryl transferase from Acaryochloris marina (strain MBIC 11017).